The chain runs to 271 residues: Sulfur carrier protein FdhD (271 aa).

Cys-114 (cysteine persulfide intermediate) is an active-site residue.

The protein belongs to the FdhD family.

It localises to the cytoplasm. Required for formate dehydrogenase (FDH) activity. Acts as a sulfur carrier protein that transfers sulfur from IscS to the molybdenum cofactor prior to its insertion into FDH. The chain is Sulfur carrier protein FdhD from Agrobacterium fabrum (strain C58 / ATCC 33970) (Agrobacterium tumefaciens (strain C58)).